We begin with the raw amino-acid sequence, 842 residues long: 9-beta-pimara-7,15-diene synthase, chloroplastic (842 aa).

Residues 1 to 56 (MASPMEAVARSSLVLAPRRRRALGLLPAAAAAAPFVLDCRRRHNGGMRRPHVSFAC) constitute a chloroplast transit peptide. Mg(2+) contacts are provided by Asp-591, Asp-595, Asn-735, Ser-739, and Glu-743. Positions 591–595 (DDFFD) match the DDXXD motif motif.

Belongs to the terpene synthase family. Mg(2+) is required as a cofactor. Expressed in roots.

The protein resides in the plastid. The protein localises to the chloroplast. It catalyses the reaction 9alpha-copalyl diphosphate = 9beta-pimara-7,15-diene + diphosphate. Its function is as follows. Involved in the biosynthesis of momilactone A and B phytoalexins. Catalyzes the conversion of syn-copalyl diphosphate to the phytoalexin precursor syn-pimara-7,15-diene. The polypeptide is 9-beta-pimara-7,15-diene synthase, chloroplastic (Oryza sativa subsp. japonica (Rice)).